The primary structure comprises 185 residues: Erythropoietin (185 aa).

The N-terminal stretch at 1–22 is a signal peptide; it reads MLQKRGRGLLVLLLMLLEWTRP. 2 disulfides stabilise this stretch: cysteine 32–cysteine 180 and cysteine 54–cysteine 58.

This sequence belongs to the EPO/TPO family.

The protein localises to the secreted. Erythropoietin is the principal hormone involved in the regulation of erythrocyte differentiation and the maintenance of a physiological level of circulating erythrocyte mass. The polypeptide is Erythropoietin (epo) (Epinephelus coioides (Orange-spotted grouper)).